We begin with the raw amino-acid sequence, 653 residues long: tRNA uridine 5-carboxymethylaminomethyl modification enzyme MnmG (653 aa).

Residues 18–23, Val-130, and Thr-195 each bind FAD; that span reads GAGHAG. 287–301 contributes to the NAD(+) binding site; that stretch reads GPRYCPSIEDKVVRF. Gln-384 is an FAD binding site. The disordered stretch occupies residues 624 to 653; sequence SQTKSSASVDKRASSDNESSRPTSSASDSL. The segment covering 632-642 has biased composition (basic and acidic residues); that stretch reads VDKRASSDNES. Polar residues predominate over residues 643–653; sequence SRPTSSASDSL.

This sequence belongs to the MnmG family. In terms of assembly, homodimer. Heterotetramer of two MnmE and two MnmG subunits. FAD serves as cofactor.

It localises to the cytoplasm. NAD-binding protein involved in the addition of a carboxymethylaminomethyl (cmnm) group at the wobble position (U34) of certain tRNAs, forming tRNA-cmnm(5)s(2)U34. This chain is tRNA uridine 5-carboxymethylaminomethyl modification enzyme MnmG, found in Rhodopirellula baltica (strain DSM 10527 / NCIMB 13988 / SH1).